The chain runs to 380 residues: uncharacterized protein (380 aa).

Residues 287–318 (LRPKIYQDKCKNCRECLVEKYCPTFAIKRENG) form the 4Fe-4S ferredoxin-type domain.

This is an uncharacterized protein from Methanocaldococcus jannaschii (strain ATCC 43067 / DSM 2661 / JAL-1 / JCM 10045 / NBRC 100440) (Methanococcus jannaschii).